The primary structure comprises 278 residues: Neuronal membrane glycoprotein M6-a (278 aa).

Met-1 is subject to N-acetylmethionine. The Cytoplasmic segment spans residues 1-22 (MEENMEEGQTQKGCFECCIKCL). A helical membrane pass occupies residues 23–43 (GGIPYASLIATILLYAGVALF). The Extracellular portion of the chain corresponds to 44 to 84 (CGCGHEALSGTVNILQTYFELARTAGDTLDVFTMIDIFKYV). The chain crosses the membrane as a helical span at residues 85 to 105 (IYGIAAAFFVYGILLMVEGFF). Residues 106–127 (TTGAIKDLYGDFKITTCGRCVS) are Cytoplasmic-facing. The helical transmembrane segment at 128-148 (AWFIMLTYLFMLAWLGVTAFT) threads the bilayer. Topologically, residues 149 to 213 (SLPVYMYFNV…STELNMTFHL (65 aa)) are extracellular. A glycan (N-linked (GlcNAc...) asparagine) is linked at Asn-164. Residues Cys-174 and Cys-192 are joined by a disulfide bond. Asn-208 carries an N-linked (GlcNAc...) asparagine glycan. A helical transmembrane segment spans residues 214–234 (FIVALAGAGAAVIAMVHYLMV). The Cytoplasmic segment spans residues 235-278 (LSANWAYVKDACRMQKYEDIKSKEEQELHDIHSTRSKERLNAYT). Ser-256 is modified (phosphoserine). Phosphothreonine is present on Thr-278.

This sequence belongs to the myelin proteolipid protein family. In terms of assembly, interacts with OPRM1. Interacts with palmitoyltransferase ZDHHC17/HIP14; the interaction leads to palmitoylation of GPM6A. Post-translationally, N-glycosylated. Palmitoylated by ZDHHC17/HIP14. In terms of tissue distribution, widely expressed in the CNS. Found especially in the granule cell layer of the cerebellum but not in the molecular layer or white matter. Expressed in the immature embryonic retina including the nerve fiber layer (NFL), inner plexiform layer (IPL), and outer plexiform layer (OPL). Weakly expressed in processes of Mueller glia cells.

Its subcellular location is the cell membrane. The protein localises to the cell projection. The protein resides in the axon. It is found in the growth cone. It localises to the dendritic spine. Its subcellular location is the filopodium. The protein localises to the neuron projection. Involved in neuronal differentiation, including differentiation and migration of neuronal stem cells. Plays a role in neuronal plasticity and is involved in neurite and filopodia outgrowth, filopodia motility and probably synapse formation. Gpm6a-induced filopodia formation involves mitogen-activated protein kinase (MAPK) and Src signaling pathways. Conflictingly, PubMed:22162747 reports that induced cellular protrusions are simple membrane-wrapped tubules without actin or tubulin-based cytoskeletons and with Gpm6a gliding along membrane edges indicative for a function in actin-independent membrane deformation. May be involved in neuronal NGF-dependent Ca(2+) influx. May be involved in regulation of endocytosis and intracellular trafficking of G-protein-coupled receptors (GPCRs); enhances internalization and recycling of mu-type opioid receptor. This is Neuronal membrane glycoprotein M6-a (Gpm6a) from Mus musculus (Mouse).